The chain runs to 293 residues: Membrane protein RL13 (293 aa).

An N-terminal signal peptide occupies residues 1-19; that stretch reads MHWHLAITWTVIILTFSEC. The chain crosses the membrane as a helical span at residues 245–265; the sequence is IPLGIHAVWAGIVVSVALIAL.

Its subcellular location is the virion membrane. Functionally, may play a role in modifying tropism or in modulating cell signaling during virus entry. Since RL13 expression severely impairs HCMV replication in epithelial cell cultures, it may act as a regulator promoting persistence by suppressing the switch to fully lytic infection. This chain is Membrane protein RL13 (RL13), found in Human cytomegalovirus (strain Merlin) (HHV-5).